The following is a 324-amino-acid chain: Phospho-N-acetylmuramoyl-pentapeptide-transferase (324 aa).

Helical transmembrane passes span Val-5–Ile-25, Gly-55–Phe-75, Thr-81–Ile-101, Leu-122–Ile-142, Val-147–Ser-167, Leu-176–Trp-196, Val-203–His-223, Val-227–Leu-247, Leu-250–Ile-270, and Val-302–Val-322.

Belongs to the glycosyltransferase 4 family. MraY subfamily. Mg(2+) is required as a cofactor.

It localises to the cell membrane. It carries out the reaction UDP-N-acetyl-alpha-D-muramoyl-L-alanyl-gamma-D-glutamyl-meso-2,6-diaminopimeloyl-D-alanyl-D-alanine + di-trans,octa-cis-undecaprenyl phosphate = di-trans,octa-cis-undecaprenyl diphospho-N-acetyl-alpha-D-muramoyl-L-alanyl-D-glutamyl-meso-2,6-diaminopimeloyl-D-alanyl-D-alanine + UMP. The protein operates within cell wall biogenesis; peptidoglycan biosynthesis. In terms of biological role, catalyzes the initial step of the lipid cycle reactions in the biosynthesis of the cell wall peptidoglycan: transfers peptidoglycan precursor phospho-MurNAc-pentapeptide from UDP-MurNAc-pentapeptide onto the lipid carrier undecaprenyl phosphate, yielding undecaprenyl-pyrophosphoryl-MurNAc-pentapeptide, known as lipid I. This is Phospho-N-acetylmuramoyl-pentapeptide-transferase from Anoxybacillus flavithermus (strain DSM 21510 / WK1).